The sequence spans 277 residues: Phosphatidylglycerol--prolipoprotein diacylglyceryl transferase (277 aa).

4 helical membrane-spanning segments follow: residues leucine 16–tryptophan 36, phenylalanine 58–tyrosine 78, isoleucine 93–leucine 113, and glycine 119–leucine 139. Arginine 141 serves as a coordination point for a 1,2-diacyl-sn-glycero-3-phospho-(1'-sn-glycerol). 3 helical membrane-spanning segments follow: residues alanine 182–valine 202, glycine 207–phenylalanine 227, and phenylalanine 239–leucine 259.

It belongs to the Lgt family.

It localises to the cell inner membrane. The enzyme catalyses L-cysteinyl-[prolipoprotein] + a 1,2-diacyl-sn-glycero-3-phospho-(1'-sn-glycerol) = an S-1,2-diacyl-sn-glyceryl-L-cysteinyl-[prolipoprotein] + sn-glycerol 1-phosphate + H(+). It participates in protein modification; lipoprotein biosynthesis (diacylglyceryl transfer). Catalyzes the transfer of the diacylglyceryl group from phosphatidylglycerol to the sulfhydryl group of the N-terminal cysteine of a prolipoprotein, the first step in the formation of mature lipoproteins. In Rhodospirillum centenum (strain ATCC 51521 / SW), this protein is Phosphatidylglycerol--prolipoprotein diacylglyceryl transferase.